Consider the following 503-residue polypeptide: Arabinose import ATP-binding protein AraG 1 (503 aa).

2 consecutive ABC transporter domains span residues 5 to 240 and 251 to 497; these read LRFD…MVGR and RTLG…LPQT. 37–44 contributes to the ATP binding site; it reads GENGAGKS.

The protein belongs to the ABC transporter superfamily. Arabinose importer (TC 3.A.1.2.2) family. The complex is composed of two ATP-binding proteins (AraG), two transmembrane proteins (AraH) and a solute-binding protein (AraF).

The protein localises to the cell inner membrane. It carries out the reaction L-arabinose(out) + ATP + H2O = L-arabinose(in) + ADP + phosphate + H(+). Part of the ABC transporter complex AraFGH involved in arabinose import. Responsible for energy coupling to the transport system. The polypeptide is Arabinose import ATP-binding protein AraG 1 (Burkholderia cenocepacia (strain HI2424)).